The primary structure comprises 146 residues: Cytidine deaminase (146 aa).

The CMP/dCMP-type deaminase domain maps to 13-140 (ECVQQLLVCS…ELLPSSFGPE (128 aa)). Substrate is bound at residue 54-60 (NIENACY). Residue Cys65 participates in Zn(2+) binding. Glu67 functions as the Proton donor in the catalytic mechanism. Zn(2+)-binding residues include Cys99 and Cys102.

The protein belongs to the cytidine and deoxycytidylate deaminase family. Homotetramer. It depends on Zn(2+) as a cofactor. Highly expressed in granulocytes while expression is very low in fibroblasts, chondrocytes, monocytes, and T- as well as B-cell lines.

It catalyses the reaction cytidine + H2O + H(+) = uridine + NH4(+). The enzyme catalyses 2'-deoxycytidine + H2O + H(+) = 2'-deoxyuridine + NH4(+). This enzyme scavenges exogenous and endogenous cytidine and 2'-deoxycytidine for UMP synthesis. In Homo sapiens (Human), this protein is Cytidine deaminase.